We begin with the raw amino-acid sequence, 121 residues long: uncharacterized protein (121 aa).

This is an uncharacterized protein from Streptococcus pyogenes serotype M6 (strain ATCC BAA-946 / MGAS10394).